Here is a 298-residue protein sequence, read N- to C-terminus: Phosphatidylglycerol--prolipoprotein diacylglyceryl transferase (298 aa).

7 helical membrane-spanning segments follow: residues 17-37 (LAVR…IVVG), 59-79 (MMFY…VLFY), 97-117 (GGMS…LFAW), 129-149 (FVAP…FING), 204-224 (SQLY…FLFA), 230-250 (MGAI…TVEF), and 257-277 (FLGL…PMIL). Arg142 is an a 1,2-diacyl-sn-glycero-3-phospho-(1'-sn-glycerol) binding site.

This sequence belongs to the Lgt family.

The protein resides in the cell inner membrane. The enzyme catalyses L-cysteinyl-[prolipoprotein] + a 1,2-diacyl-sn-glycero-3-phospho-(1'-sn-glycerol) = an S-1,2-diacyl-sn-glyceryl-L-cysteinyl-[prolipoprotein] + sn-glycerol 1-phosphate + H(+). It functions in the pathway protein modification; lipoprotein biosynthesis (diacylglyceryl transfer). Catalyzes the transfer of the diacylglyceryl group from phosphatidylglycerol to the sulfhydryl group of the N-terminal cysteine of a prolipoprotein, the first step in the formation of mature lipoproteins. The chain is Phosphatidylglycerol--prolipoprotein diacylglyceryl transferase from Burkholderia orbicola (strain MC0-3).